The sequence spans 323 residues: 4-hydroxyphenylpyruvate 3-dimethylallyltransferase (323 aa).

R160 and E281 together coordinate substrate.

Belongs to the aromatic prenyltransferase family. As to quaternary structure, monomer.

The protein localises to the cytoplasm. The enzyme catalyses 3-(4-hydroxyphenyl)pyruvate + dimethylallyl diphosphate = 3-dimethylallyl-4-hydroxyphenylpyruvate + diphosphate. The protein operates within antibiotic biosynthesis; novobiocin biosynthesis. Magnesium-independent aromatic prenyltransferase that catalyzes the irreversible transfer of a dimethylallyl group to 4-hydroxyphenylpyruvate to produce the ring A structure in the novobiocin biosynthesis pathway. Novobiocin is an aminocoumarin family antibiotic that targets bacterial DNA gyrases. It is able to prenylate many different compounds, including the phenylpropanoids 4-coumarate and caffeate, the plant polyketide resveratrol, the (iso)flavonoid naringenin, apigenin, daidzein and genistein, and the dihydroxynaphthalenes 1,6-DHN and 2,7-DHN. This is 4-hydroxyphenylpyruvate 3-dimethylallyltransferase from Streptomyces niveus (Streptomyces spheroides).